A 591-amino-acid chain; its full sequence is Aspartate--tRNA ligase (591 aa).

Residue Glu-171 participates in L-aspartate binding. Residues 195–198 form an aspartate region; it reads QLFK. Arg-217 is a binding site for L-aspartate. ATP contacts are provided by residues 217-219 and Gln-226; that span reads RDE. Position 448 (His-448) interacts with L-aspartate. Glu-482 contributes to the ATP binding site. L-aspartate is bound at residue Arg-489. ATP is bound at residue 534–537; sequence GLDR.

This sequence belongs to the class-II aminoacyl-tRNA synthetase family. Type 1 subfamily. As to quaternary structure, homodimer.

It localises to the cytoplasm. The catalysed reaction is tRNA(Asp) + L-aspartate + ATP = L-aspartyl-tRNA(Asp) + AMP + diphosphate. Catalyzes the attachment of L-aspartate to tRNA(Asp) in a two-step reaction: L-aspartate is first activated by ATP to form Asp-AMP and then transferred to the acceptor end of tRNA(Asp). In Aliivibrio fischeri (strain MJ11) (Vibrio fischeri), this protein is Aspartate--tRNA ligase.